A 165-amino-acid polypeptide reads, in one-letter code: uncharacterized protein (165 aa).

The disordered stretch occupies residues 53-123 (CSEKTGSAPN…PAPSSGRQGG (71 aa)). The segment covering 58–71 (GSAPNPGSSAPAPA) has biased composition (low complexity).

This is an uncharacterized protein from Treponema pallidum (strain Nichols).